The following is a 493-amino-acid chain: Aspartate-semialdehyde dehydrogenase (Non-phosphorylating) (493 aa).

NADP(+)-binding positions include 160–161, 184–187, and 237–238; these read WN, KPAH, and GS. The active-site Proton acceptor is the Glu-259. Leu-260 is a binding site for NADP(+). Cys-293 (nucleophile) is an active-site residue. Glu-390 contributes to the NADP(+) binding site.

The protein belongs to the aldehyde dehydrogenase family.

It is found in the cytoplasm. It catalyses the reaction L-aspartate 4-semialdehyde + NAD(+) + H2O = L-aspartate + NADH + 2 H(+). Its function is as follows. Involved in the degradation of ectoine, which allows H.elongata to utilize ectoine as both a carbon and a nitrogen source for growth. Probably catalyzes the NAD(+)-dependent oxidation of L-aspartate-semialdehyde to L-aspartate. The chain is Aspartate-semialdehyde dehydrogenase (Non-phosphorylating) from Halomonas elongata (strain ATCC 33173 / DSM 2581 / NBRC 15536 / NCIMB 2198 / 1H9).